Here is a 551-residue protein sequence, read N- to C-terminus: Trehalose-6-phosphate hydrolase (551 aa).

The active-site Nucleophile is the Asp200. Glu251 acts as the Proton donor in catalysis.

This sequence belongs to the glycosyl hydrolase 13 family.

Its subcellular location is the cytoplasm. The catalysed reaction is alpha,alpha-trehalose 6-phosphate + H2O = D-glucose 6-phosphate + D-glucose. Its function is as follows. Hydrolyzes trehalose-6-phosphate to glucose and glucose 6-phosphate. Can also very effectively hydrolyze p-nitrophenyl-alpha-D-glucopyranoside, but it does not recognize trehalose, sucrose, maltose, isomaltose, or maltodextrins. The protein is Trehalose-6-phosphate hydrolase (treC) of Escherichia coli (strain K12).